Consider the following 243-residue polypeptide: uncharacterized protein (243 aa).

The short motif at 207–224 (KKTSISGYKTLDVKRKFV) is the Bipartite nuclear localization signal element.

This is an uncharacterized protein from Acheta domesticus (House cricket).